We begin with the raw amino-acid sequence, 359 residues long: Probable F-box protein At3g61730 (359 aa).

Composition is skewed to basic and acidic residues over residues 1–14 and 37–48; these read MKTR…DSRG and QKNDIQREEDGR. The disordered stretch occupies residues 1 to 60; that stretch reads MKTRSSDAEGDSRGKMIAPVGEGNGGRKRKLVQSNEQKNDIQREEDGRAKRRIVQSSDQK. The region spanning 82-128 is the F-box; degenerate domain; sequence QSRFSWYEQDIWTYISRFLDGKSLVKLGATNKWFYKIAMEDTVWRFA.

In terms of assembly, interacts with SKP1A. As to expression, expressed in flower buds, developing anthers, pollen grains, siliques, rosette leaves and roots. Detected at lower levels in open flowers, stems and cauline leaves. Expressed in young seedling in the hydathodes, shoot apical meristem, root tips and lateral root primordia.

It localises to the nucleus. Regulates tapetum degeneration and pollen maturation during anther development. The polypeptide is Probable F-box protein At3g61730 (RMF) (Arabidopsis thaliana (Mouse-ear cress)).